The following is a 290-amino-acid chain: D-tagatose-1,6-bisphosphate aldolase subunit KbaY (290 aa).

D82 serves as the catalytic Proton donor. Positions 83 and 180 each coordinate Zn(2+). G181 is a binding site for dihydroxyacetone phosphate. H208 contacts Zn(2+). Residues 209-211 and 230-233 contribute to the dihydroxyacetone phosphate site; these read GAS and NVAT.

The protein belongs to the class II fructose-bisphosphate aldolase family. TagBP aldolase KbaY subfamily. As to quaternary structure, homotetramer. Forms a complex with KbaZ. It depends on Zn(2+) as a cofactor.

It catalyses the reaction D-tagatofuranose 1,6-bisphosphate = D-glyceraldehyde 3-phosphate + dihydroxyacetone phosphate. The protein operates within carbohydrate metabolism; D-tagatose 6-phosphate degradation; D-glyceraldehyde 3-phosphate and glycerone phosphate from D-tagatose 6-phosphate: step 2/2. In terms of biological role, catalytic subunit of the tagatose-1,6-bisphosphate aldolase KbaYZ, which catalyzes the reversible aldol condensation of dihydroxyacetone phosphate (DHAP or glycerone-phosphate) with glyceraldehyde 3-phosphate (G3P) to produce tagatose 1,6-bisphosphate (TBP). Requires KbaZ subunit for full activity and stability. The protein is D-tagatose-1,6-bisphosphate aldolase subunit KbaY of Salmonella arizonae (strain ATCC BAA-731 / CDC346-86 / RSK2980).